The chain runs to 44 residues: Protein PsbN (44 aa).

Residues 6-26 form a helical membrane-spanning segment; it reads FFFTLFLWFFLLSITIYSIYI.

Belongs to the PsbN family.

It is found in the plastid. Its subcellular location is the chloroplast thylakoid membrane. May play a role in photosystem I and II biogenesis. The protein is Protein PsbN of Oedogonium cardiacum (Filamentous green alga).